A 328-amino-acid polypeptide reads, in one-letter code: DNA-directed RNA polymerase subunit alpha (328 aa).

Residues 1–232 (MSTQGFLKPR…DQISVFAALE (232 aa)) are alpha N-terminal domain (alpha-NTD). The alpha C-terminal domain (alpha-CTD) stretch occupies residues 248–328 (IDPVLLRPVD…NWPPLGLERP (81 aa)).

The protein belongs to the RNA polymerase alpha chain family. In terms of assembly, homodimer. The RNAP catalytic core consists of 2 alpha, 1 beta, 1 beta' and 1 omega subunit. When a sigma factor is associated with the core the holoenzyme is formed, which can initiate transcription.

The enzyme catalyses RNA(n) + a ribonucleoside 5'-triphosphate = RNA(n+1) + diphosphate. DNA-dependent RNA polymerase catalyzes the transcription of DNA into RNA using the four ribonucleoside triphosphates as substrates. The protein is DNA-directed RNA polymerase subunit alpha of Bordetella petrii (strain ATCC BAA-461 / DSM 12804 / CCUG 43448).